The chain runs to 146 residues: UPF0742 protein SPAC977.02 (146 aa).

The helical transmembrane segment at 38–60 (LTVKYCLAVKLLIYLLYCWYIYS) threads the bilayer.

It belongs to the UPF0742 family.

The protein localises to the cytoplasm. It localises to the nucleus membrane. This Schizosaccharomyces pombe (strain 972 / ATCC 24843) (Fission yeast) protein is UPF0742 protein SPAC977.02.